The chain runs to 638 residues: Methylmalonyl-CoA mutase small subunit (638 aa).

Over residues 1–11 (MSSTDQGTNPA) the composition is skewed to polar residues. The disordered stretch occupies residues 1-34 (MSSTDQGTNPADTDDLTPTTLSLAGDFPKATEEQ).

Belongs to the methylmalonyl-CoA mutase family. Heterodimer of an alpha and a beta chain. Adenosylcob(III)alamin serves as cofactor.

It carries out the reaction (R)-methylmalonyl-CoA = succinyl-CoA. Its pathway is metabolic intermediate metabolism; propanoyl-CoA degradation; succinyl-CoA from propanoyl-CoA: step 3/3. In terms of biological role, catalyzes the isomerization of succinyl-CoA to methylmalonyl-CoA during synthesis of propionate from tricarboxylic acid-cycle intermediates. This Propionibacterium freudenreichii subsp. shermanii protein is Methylmalonyl-CoA mutase small subunit (mutA).